We begin with the raw amino-acid sequence, 225 residues long: UPF0758 protein swp_2203 (225 aa).

Residues 102 to 224 enclose the MPN domain; it reads ILSDPDLTRD…IVSFAERGWI (123 aa). The Zn(2+) site is built by histidine 173, histidine 175, and aspartate 186. The JAMM motif signature appears at 173–186; the sequence is HNHPSGIAEPSTAD.

The protein belongs to the UPF0758 family.

This chain is UPF0758 protein swp_2203, found in Shewanella piezotolerans (strain WP3 / JCM 13877).